Consider the following 227-residue polypeptide: Cytochrome c oxidase subunit 2 (227 aa).

The Mitochondrial intermembrane segment spans residues 1–14 (MAYPFQLGLQDATS). Residues 15-45 (PIMEELLHFHDHTLMIVFLISSLVLYIISSM) form a helical membrane-spanning segment. Residues 46–59 (LTTKLTHTSTMDAQ) are Mitochondrial matrix-facing. The helical transmembrane segment at 60 to 87 (EVETVWTILPAIILVLIALPSLRILYMM) threads the bilayer. The Mitochondrial intermembrane segment spans residues 88-227 (DETNNPSLTV…YFETWSALMV (140 aa)). Cu cation contacts are provided by H161, C196, E198, C200, H204, and M207. Position 198 (E198) interacts with Mg(2+). Y218 bears the Phosphotyrosine mark.

Belongs to the cytochrome c oxidase subunit 2 family. Component of the cytochrome c oxidase (complex IV, CIV), a multisubunit enzyme composed of 14 subunits. The complex is composed of a catalytic core of 3 subunits MT-CO1, MT-CO2 and MT-CO3, encoded in the mitochondrial DNA, and 11 supernumerary subunits COX4I, COX5A, COX5B, COX6A, COX6B, COX6C, COX7A, COX7B, COX7C, COX8 and NDUFA4, which are encoded in the nuclear genome. The complex exists as a monomer or a dimer and forms supercomplexes (SCs) in the inner mitochondrial membrane with NADH-ubiquinone oxidoreductase (complex I, CI) and ubiquinol-cytochrome c oxidoreductase (cytochrome b-c1 complex, complex III, CIII), resulting in different assemblies (supercomplex SCI(1)III(2)IV(1) and megacomplex MCI(2)III(2)IV(2)). Found in a complex with TMEM177, COA6, COX18, COX20, SCO1 and SCO2. Interacts with TMEM177 in a COX20-dependent manner. Interacts with COX20. Interacts with COX16. Requires Cu cation as cofactor.

The protein resides in the mitochondrion inner membrane. It catalyses the reaction 4 Fe(II)-[cytochrome c] + O2 + 8 H(+)(in) = 4 Fe(III)-[cytochrome c] + 2 H2O + 4 H(+)(out). Its function is as follows. Component of the cytochrome c oxidase, the last enzyme in the mitochondrial electron transport chain which drives oxidative phosphorylation. The respiratory chain contains 3 multisubunit complexes succinate dehydrogenase (complex II, CII), ubiquinol-cytochrome c oxidoreductase (cytochrome b-c1 complex, complex III, CIII) and cytochrome c oxidase (complex IV, CIV), that cooperate to transfer electrons derived from NADH and succinate to molecular oxygen, creating an electrochemical gradient over the inner membrane that drives transmembrane transport and the ATP synthase. Cytochrome c oxidase is the component of the respiratory chain that catalyzes the reduction of oxygen to water. Electrons originating from reduced cytochrome c in the intermembrane space (IMS) are transferred via the dinuclear copper A center (CU(A)) of subunit 2 and heme A of subunit 1 to the active site in subunit 1, a binuclear center (BNC) formed by heme A3 and copper B (CU(B)). The BNC reduces molecular oxygen to 2 water molecules using 4 electrons from cytochrome c in the IMS and 4 protons from the mitochondrial matrix. The chain is Cytochrome c oxidase subunit 2 (MT-CO2) from Chrysocyon brachyurus (Maned wolf).